Here is a 495-residue protein sequence, read N- to C-terminus: uncharacterized protein (495 aa).

The CHY-type zinc finger occupies 389–457 (PLPNNGACEH…KDATCPHCGN (69 aa)). Cysteine 396, histidine 398, cysteine 410, cysteine 411, cysteine 417, cysteine 420, histidine 421, histidine 427, cysteine 437, cysteine 440, cysteine 452, and cysteine 455 together coordinate Zn(2+). The span at 473-483 (GMRDRVRMSRK) shows a compositional bias: basic and acidic residues. The disordered stretch occupies residues 473–495 (GMRDRVRMSRKDPRKYKRKHHGN). A compositionally biased stretch (basic residues) spans 484-495 (DPRKYKRKHHGN).

It localises to the cytoplasm. This is an uncharacterized protein from Schizosaccharomyces pombe (strain 972 / ATCC 24843) (Fission yeast).